Here is a 306-residue protein sequence, read N- to C-terminus: Ribonuclease BN (306 aa).

The Zn(2+) site is built by His-64, His-66, Asp-68, His-69, His-141, Asp-212, and His-270. Asp-68 acts as the Proton acceptor in catalysis.

It belongs to the RNase Z family. RNase BN subfamily. Homodimer. The cofactor is Zn(2+).

Its function is as follows. Zinc phosphodiesterase, which has both exoribonuclease and endoribonuclease activities. This chain is Ribonuclease BN, found in Klebsiella pneumoniae (strain 342).